The chain runs to 217 residues: tRNA (guanine-N(7)-)-methyltransferase (217 aa).

S-adenosyl-L-methionine contacts are provided by E44, E69, D96, and D118. D118 is a catalytic residue. Substrate is bound at residue K122. Residues 124 to 129 (RHEKRR) form an interaction with RNA region. Substrate-binding positions include D154 and 191-194 (TEYE).

It belongs to the class I-like SAM-binding methyltransferase superfamily. TrmB family.

The catalysed reaction is guanosine(46) in tRNA + S-adenosyl-L-methionine = N(7)-methylguanosine(46) in tRNA + S-adenosyl-L-homocysteine. The protein operates within tRNA modification; N(7)-methylguanine-tRNA biosynthesis. Catalyzes the formation of N(7)-methylguanine at position 46 (m7G46) in tRNA. This Bacillus velezensis (strain DSM 23117 / BGSC 10A6 / LMG 26770 / FZB42) (Bacillus amyloliquefaciens subsp. plantarum) protein is tRNA (guanine-N(7)-)-methyltransferase.